The sequence spans 275 residues: Large ribosomal subunit protein uL2 (275 aa).

Residues 224–275 form a disordered region; the sequence is AMNPVDHPHGGGEGKAPIGHPGPLTPWGKPALGYKTRKKGKASDKFIVKRRK. The span at 264 to 275 shows a compositional bias: basic and acidic residues; sequence KASDKFIVKRRK.

The protein belongs to the universal ribosomal protein uL2 family. In terms of assembly, part of the 50S ribosomal subunit. Forms a bridge to the 30S subunit in the 70S ribosome.

Functionally, one of the primary rRNA binding proteins. Required for association of the 30S and 50S subunits to form the 70S ribosome, for tRNA binding and peptide bond formation. It has been suggested to have peptidyltransferase activity; this is somewhat controversial. Makes several contacts with the 16S rRNA in the 70S ribosome. The polypeptide is Large ribosomal subunit protein uL2 (Caldanaerobacter subterraneus subsp. tengcongensis (strain DSM 15242 / JCM 11007 / NBRC 100824 / MB4) (Thermoanaerobacter tengcongensis)).